The primary structure comprises 452 residues: Bifunctional protein GlmU (452 aa).

Residues 1 to 226 (MSLAVVILAA…GWEVDGVNDR (226 aa)) are pyrophosphorylase. UDP-N-acetyl-alpha-D-glucosamine is bound by residues 8 to 11 (LAAG), Lys-22, Gln-73, 78 to 79 (GT), 99 to 101 (YGD), Gly-136, Glu-151, Asn-166, and Asn-224. Position 101 (Asp-101) interacts with Mg(2+). Asn-224 is a binding site for Mg(2+). The segment at 227–247 (VQLARLERIYQQAQAETLMRD) is linker. The interval 248-452 (GVTLLDPSRL…VANWQRPKKG (205 aa)) is N-acetyltransferase. Residues Arg-330 and Lys-348 each coordinate UDP-N-acetyl-alpha-D-glucosamine. His-360 (proton acceptor) is an active-site residue. Residues Tyr-363 and Asn-374 each contribute to the UDP-N-acetyl-alpha-D-glucosamine site. Acetyl-CoA-binding positions include Ala-377, 383–384 (NY), Ser-402, Ala-420, and Arg-437.

In the N-terminal section; belongs to the N-acetylglucosamine-1-phosphate uridyltransferase family. This sequence in the C-terminal section; belongs to the transferase hexapeptide repeat family. In terms of assembly, homotrimer. Mg(2+) is required as a cofactor.

It is found in the cytoplasm. It carries out the reaction alpha-D-glucosamine 1-phosphate + acetyl-CoA = N-acetyl-alpha-D-glucosamine 1-phosphate + CoA + H(+). The enzyme catalyses N-acetyl-alpha-D-glucosamine 1-phosphate + UTP + H(+) = UDP-N-acetyl-alpha-D-glucosamine + diphosphate. Its pathway is nucleotide-sugar biosynthesis; UDP-N-acetyl-alpha-D-glucosamine biosynthesis; N-acetyl-alpha-D-glucosamine 1-phosphate from alpha-D-glucosamine 6-phosphate (route II): step 2/2. It participates in nucleotide-sugar biosynthesis; UDP-N-acetyl-alpha-D-glucosamine biosynthesis; UDP-N-acetyl-alpha-D-glucosamine from N-acetyl-alpha-D-glucosamine 1-phosphate: step 1/1. It functions in the pathway bacterial outer membrane biogenesis; LPS lipid A biosynthesis. Catalyzes the last two sequential reactions in the de novo biosynthetic pathway for UDP-N-acetylglucosamine (UDP-GlcNAc). The C-terminal domain catalyzes the transfer of acetyl group from acetyl coenzyme A to glucosamine-1-phosphate (GlcN-1-P) to produce N-acetylglucosamine-1-phosphate (GlcNAc-1-P), which is converted into UDP-GlcNAc by the transfer of uridine 5-monophosphate (from uridine 5-triphosphate), a reaction catalyzed by the N-terminal domain. The polypeptide is Bifunctional protein GlmU (Alcanivorax borkumensis (strain ATCC 700651 / DSM 11573 / NCIMB 13689 / SK2)).